Reading from the N-terminus, the 217-residue chain is Lipoprotein CseA (217 aa).

The signal sequence occupies residues 1–34 (MRGLGTESLRARGALKAAIAAVAGLAVLGLSVSA). Cysteine 35 carries the N-palmitoyl cysteine lipid modification. Cysteine 35 carries the S-diacylglycerol cysteine lipid modification. Disordered stretches follow at residues 39 to 66 (GTGA…SPSK) and 192 to 217 (FSEE…PAPN).

The protein resides in the cell membrane. May be involved in the stabilization of the cell envelope or may interact with the sensor protein CseC to modulate its activity, in response to cell envelope stress. The polypeptide is Lipoprotein CseA (cseA) (Streptomyces avermitilis (strain ATCC 31267 / DSM 46492 / JCM 5070 / NBRC 14893 / NCIMB 12804 / NRRL 8165 / MA-4680)).